Here is a 199-residue protein sequence, read N- to C-terminus: Holliday junction branch migration complex subunit RuvA (199 aa).

The tract at residues 1 to 63 is domain I; that stretch reads MIDYIKGNLV…EDSQRLFGFT (63 aa). The interval 64-142 is domain II; sequence TRTERLLFEK…DMAPMLEPAA (79 aa). Residues 143–153 are flexible linker; sequence GADKQQKNPQL. The tract at residues 153–199 is domain III; it reads LEDALEALRALGYVEKELKKVEKQLKAETLETDEYIRRALALMLKRP.

This sequence belongs to the RuvA family. In terms of assembly, homotetramer. Forms an RuvA(8)-RuvB(12)-Holliday junction (HJ) complex. HJ DNA is sandwiched between 2 RuvA tetramers; dsDNA enters through RuvA and exits via RuvB. An RuvB hexamer assembles on each DNA strand where it exits the tetramer. Each RuvB hexamer is contacted by two RuvA subunits (via domain III) on 2 adjacent RuvB subunits; this complex drives branch migration. In the full resolvosome a probable DNA-RuvA(4)-RuvB(12)-RuvC(2) complex forms which resolves the HJ.

The protein resides in the cytoplasm. Its function is as follows. The RuvA-RuvB-RuvC complex processes Holliday junction (HJ) DNA during genetic recombination and DNA repair, while the RuvA-RuvB complex plays an important role in the rescue of blocked DNA replication forks via replication fork reversal (RFR). RuvA specifically binds to HJ cruciform DNA, conferring on it an open structure. The RuvB hexamer acts as an ATP-dependent pump, pulling dsDNA into and through the RuvAB complex. HJ branch migration allows RuvC to scan DNA until it finds its consensus sequence, where it cleaves and resolves the cruciform DNA. The sequence is that of Holliday junction branch migration complex subunit RuvA from Shouchella clausii (strain KSM-K16) (Alkalihalobacillus clausii).